The following is a 162-amino-acid chain: Anaerobic nitrite reductase (162 aa).

Position 2 is an N-acetylserine (Ser2). The region spanning 9–158 (VFTEEQEALV…LVAAIKFEMK (150 aa)) is the Globin domain. Residues 42–46 (EIAPS) carry the Homodimerization motif. Residues Ser52, Lys66, His70, Arg100, and His105 each coordinate heme b. The Homodimerization signature appears at 112 to 124 (NEHFEVTRFALLE).

Belongs to the plant globin family. As to quaternary structure, homodimer with distinct heme coordination in each subunits. Heme b is required as a cofactor. As to expression, root nodules.

The protein resides in the cytoplasm. Its subcellular location is the nucleus. The catalysed reaction is Fe(III)-heme b-[protein] + nitric oxide + H2O = Fe(II)-heme b-[protein] + nitrite + 2 H(+). Functionally, phytoglobin that reduces nitrite to nitric oxide (NO) under anoxic conditions (e.g. during flooding or in waterlogged soil) and upon root nodulation. Required for general plant development and during nodulation, especially for the onset of symbiosis. Monitors nitric oxide (NO) levels during early phase of the nitrogen-fixing symbiosis and buffers oxygen in functioning nodules. May not function as an oxygen storage or transport protein. Has an unusually high affinity for O(2) through a hexacoordinate heme iron because of a very low dissociation constant. This chain is Anaerobic nitrite reductase, found in Parasponia andersonii (Sponia andersonii).